Here is a 174-residue protein sequence, read N- to C-terminus: Large ribosomal subunit protein uL18 (174 aa).

Belongs to the universal ribosomal protein uL18 family. In terms of assembly, part of the 50S ribosomal subunit. Contacts the 5S and 23S rRNAs.

In terms of biological role, this is one of the proteins that bind and probably mediate the attachment of the 5S RNA into the large ribosomal subunit, where it forms part of the central protuberance. This Methanosarcina barkeri (strain Fusaro / DSM 804) protein is Large ribosomal subunit protein uL18.